Reading from the N-terminus, the 446-residue chain is Argininosuccinate lyase (446 aa).

Belongs to the lyase 1 family. Argininosuccinate lyase subfamily.

It localises to the cytoplasm. The catalysed reaction is 2-(N(omega)-L-arginino)succinate = fumarate + L-arginine. It participates in amino-acid biosynthesis; L-arginine biosynthesis; L-arginine from L-ornithine and carbamoyl phosphate: step 3/3. The chain is Argininosuccinate lyase from Sulfurisphaera tokodaii (strain DSM 16993 / JCM 10545 / NBRC 100140 / 7) (Sulfolobus tokodaii).